The sequence spans 647 residues: MGKIRKLDDQLSNLIAAGEVVERPASVVKELVENSIDANSTSIEIHLEEAGLSKIRIIDNGDGIAEEDCIVAFERHATSKIKDENDLFRIRTLGFRGEALPSIASVSELELITSTGDAPGTHLIIKGGDIIKQEKTASRKGTDITVQNLFFNTPARLKYMKTIHTELGNITDIVYRIAMSHPEVSLKLFHNEKKLLHTSGNGDVRQVLASIYSIQVAKKLVPIEAESLDFTIKGYVTLPEVTRASRNYMSTIVNGRYVRNFVLMKAIQQGYHTLLPVGRYPIGFLSIEMDPMLVDVNVHPAKLEVRFSKEQELLKLIEETLQTAFKKIQLIPDAGVTTKKKEKDESVQEQFQFEHAKPKEPSMPDIILPMGMDEKQEEPLAVKQPAQLWQPPKQEWQPPQSLVREEQSWQPSTKPIMEEPIREEKSWDSNEEDFELEELEEEVREIEEIEMNGNDLPPLYPIGQMHGTYIFAQNDKGLYMIDQHAAQERINYEYFRDKVGRVAQEVQELLVPYRIDLSLTEFLRVEEQLEELKKVGLFLEQFGHQSFIVRSHPTWFPKGQETEIIDEMMEQVVKLKKVDIKKLREEAAIMMSCKASIKANQYLTNDQIFALLEELRTTTNPYTCPHGRPILVHHSTYELEKMFKRVM.

This sequence belongs to the DNA mismatch repair MutL/HexB family.

This protein is involved in the repair of mismatches in DNA. It is required for dam-dependent methyl-directed DNA mismatch repair. May act as a 'molecular matchmaker', a protein that promotes the formation of a stable complex between two or more DNA-binding proteins in an ATP-dependent manner without itself being part of a final effector complex. This chain is DNA mismatch repair protein MutL, found in Bacillus thuringiensis subsp. konkukian (strain 97-27).